A 522-amino-acid polypeptide reads, in one-letter code: Protein GDS1 (522 aa).

Disordered stretches follow at residues 56 to 88 (ALDD…PKKD), 222 to 268 (QQLE…SSNS), 300 to 391 (LSPS…SHNA), and 433 to 489 (STQT…SRNE). The span at 62-73 (LAGSSFSSSQEI) shows a compositional bias: polar residues. The span at 74 to 88 (KATKPKKDFGAPKKD) shows a compositional bias: basic and acidic residues. 4 stretches are compositionally biased toward polar residues: residues 222–236 (QQLE…FNSN), 244–260 (SSNQ…SMTD), 300–314 (LSPS…LLTP), and 355–366 (SQSLSVLSTPKK). Low complexity predominate over residues 368–378 (SSASLSTFASS). Residues 379–391 (KNISPDSSLSHNA) are compositionally biased toward polar residues. Low complexity predominate over residues 439-467 (ESSSESSQYNSSSSSPVNSAAASSAESLS). Residues 468–489 (DINSSQDNGRESNPSSQESRNE) show a composition bias toward polar residues.

Involved in nuclear control of mitochondria. The sequence is that of Protein GDS1 (GDS1) from Saccharomyces cerevisiae (strain ATCC 204508 / S288c) (Baker's yeast).